The chain runs to 313 residues: PGR5-like protein 1B, chloroplastic (313 aa).

A chloroplast-targeting transit peptide spans 1-49 (MAFTLTIPRFSAISRKPITCSSSRTQCPAPFTHGRSISLRRRLTLLPLK). Position 50 is an N-acetylalanine (Ala-50). The Stromal segment spans residues 50–187 (ASTDQSGQVG…KVYSDLAIDY (138 aa)). The cysteines at positions 71 and 172 are disulfide-linked. Residues 188–208 (FKMFLLNVPATVVALGLFFFL) form a helical membrane-spanning segment. At 209 to 225 (DDITGFEITYLLELPEP) the chain is on the lumenal, thylakoid side. The helical transmembrane segment at 226–246 (FSFIFTWFAAVPAIVYLALSL) threads the bilayer. At 247–313 (TKLILKDFLI…LITLPEGGKA (67 aa)) the chain is on the stromal side.

The protein belongs to the PGR5 family. Homodimer and heterodimer with PGR5. Interacts with PGR5, FD2, psaD1, LFNR1 and LFNR2. Also interacts with petC and a Fe-containing cofactor (FCC). Disulfide bonds; Cys-289 and Cys-292 are probably involved in the formation of disulfide bridges with 'Cys-11' and 'Cys-105' of PGR5 while Cys-261 and Cys-264 are probably involved in the binding of a Fe-containing cofactor (FCC).

It is found in the plastid. Its subcellular location is the chloroplast thylakoid membrane. Its activity is regulated as follows. Inhibited by antimycin A. Its function is as follows. Ferredoxin-plastoquinone reductase involved in cyclic electron flow (CEF) around photosystem I. The homodimer is probably not involved in CEF. In Arabidopsis thaliana (Mouse-ear cress), this protein is PGR5-like protein 1B, chloroplastic (PGRL1B).